We begin with the raw amino-acid sequence, 276 residues long: Insulin-induced gene 1 protein (276 aa).

2 disordered regions span residues methionine 1–serine 26 and alanine 49–serine 73. Topologically, residues methionine 1–leucine 83 are cytoplasmic. A compositionally biased stretch (basic residues) spans glycine 16–alanine 25. Residues valine 84–valine 106 traverse the membrane as a helical segment. At glutamine 107–alanine 125 the chain is on the extracellular side. Residues tryptophan 126 to tyrosine 143 traverse the membrane as a helical segment. Over proline 144–arginine 158 the chain is Cytoplasmic. Glycyl lysine isopeptide (Lys-Gly) (interchain with G-Cter in ubiquitin) cross-links involve residues lysine 155 and lysine 157. Residues glutamate 159–aspartate 181 form a helical membrane-spanning segment. Over phenylalanine 182–asparagine 184 the chain is Extracellular. Residues asparagine 185–phenylalanine 203 form a helical membrane-spanning segment. Over aspartate 204–serine 208 the chain is Cytoplasmic. Serine 206 bears the Phosphoserine mark. Residues glycine 209–asparagine 230 traverse the membrane as a helical segment. The Extracellular segment spans residues glycine 231–arginine 244. A helical transmembrane segment spans residues serine 245–glycine 262. The Cytoplasmic segment spans residues arginine 263 to aspartate 276. Residues proline 270–aspartate 276 carry the KxHxx motif.

Belongs to the INSIG family. As to quaternary structure, interacts with SCAP; interaction is direct and only takes place in the presence of sterols; it prevents interaction between SCAP and the coat protein complex II (COPII). Associates with the SCAP-SREBP complex (composed of SCAP and SREBF1/SREBP1 or SREBF2/SREBP2); association is mediated via its interaction with SCAP and only takes place in the presence of sterols. Interaction with SCAP is mutually exclusive with PAQR3. Interacts with HMGCR (via its SSD); the interaction, accelerated by sterols, leads to the recruitment of HMGCR to AMFR/gp78 for its ubiquitination by the sterol-mediated ERAD pathway. Interacts with AMFR/gp78 (via its membrane domain); the interaction recruits HMCR at the ER membrane for its ubiquitination and degradation by the sterol-mediated ERAD pathway. Interacts with SOAT2/ACAT2; leading to promote recruitment of AMFR/gp78 and subsequent ubiquitination of SOAT2/ACAT2. Interacts with RNF139. Interacts with RNF145. Post-translationally, phosphorylation at Ser-206 by PCK1 reduces binding to oxysterol, disrupting the interaction between INSIG1 and SCAP, thereby promoting nuclear translocation of SREBP proteins (SREBF1/SREBP1 or SREBF2/SREBP2) and subsequent transcription of downstream lipogenesis-related genes. Ubiquitinated by AMFR/gp78 in response to sterol deprivation, leading to its degradation: when the SCAP-SREBP complex becomes dissociated from INSIG1, INSIG1 is then ubiquitinated and degraded in proteasomes. Although ubiquitination is required for rapid INSIG1 degradation, it is not required for release of the SCAP-SREBP complex. Ubiquitinated by RNF139.

It is found in the endoplasmic reticulum membrane. Oxysterol-binding protein that mediates feedback control of cholesterol synthesis by controlling both endoplasmic reticulum to Golgi transport of SCAP and degradation of HMGCR. Acts as a negative regulator of cholesterol biosynthesis by mediating the retention of the SCAP-SREBP complex in the endoplasmic reticulum, thereby blocking the processing of sterol regulatory element-binding proteins (SREBPs) SREBF1/SREBP1 and SREBF2/SREBP2. Binds oxysterol, including 25-hydroxycholesterol, regulating interaction with SCAP and retention of the SCAP-SREBP complex in the endoplasmic reticulum. In presence of oxysterol, interacts with SCAP, retaining the SCAP-SREBP complex in the endoplasmic reticulum, thereby preventing SCAP from escorting SREBF1/SREBP1 and SREBF2/SREBP2 to the Golgi. Sterol deprivation or phosphorylation by PCK1 reduce oxysterol-binding, disrupting the interaction between INSIG1 and SCAP, thereby promoting Golgi transport of the SCAP-SREBP complex, followed by processing and nuclear translocation of SREBF1/SREBP1 and SREBF2/SREBP2. Also regulates cholesterol synthesis by regulating degradation of HMGCR: initiates the sterol-mediated ubiquitin-mediated endoplasmic reticulum-associated degradation (ERAD) of HMGCR via recruitment of the reductase to the ubiquitin ligases AMFR/gp78 and/or RNF139. Also regulates degradation of SOAT2/ACAT2 when the lipid levels are low: initiates the ubiquitin-mediated degradation of SOAT2/ACAT2 via recruitment of the ubiquitin ligases AMFR/gp78. The polypeptide is Insulin-induced gene 1 protein (Bos taurus (Bovine)).